The sequence spans 311 residues: Acyl-CoA dehydrogenase IpdE2 (311 aa).

FAD is bound by residues arginine 206 and glycine 273.

It belongs to the acyl-CoA dehydrogenase family. As to quaternary structure, heterotetramer composed of 2 IpdE1 subunits and 2 IpdE2 subunits. FAD is required as a cofactor.

It carries out the reaction 3-[(3aS,4S,5R,7aS)-5-hydroxy-7a-methyl-1-oxo-octahydro-1H-inden-4-yl]propanoyl-CoA + A = (2E)-3-[(3aS,4S,5R,7aS)-5-hydroxy-7a-methyl-1-oxo-octahydro-1H-inden-4-yl]prop-2-enoyl-CoA + AH2. It participates in steroid metabolism; cholesterol degradation. Involved in cholesterol degradation. Catalyzes the dehydrogenation of 5OH-HIP-CoA to 5OH-HIPE-CoA. The sequence is that of Acyl-CoA dehydrogenase IpdE2 from Mycolicibacterium smegmatis (strain ATCC 700084 / mc(2)155) (Mycobacterium smegmatis).